The primary structure comprises 131 residues: Small ribosomal subunit protein bS6 (131 aa).

The tract at residues 97–131 is disordered; sequence TEASPMAKARDERDSRRGPAGERSYDEAHAEEIAE. Residues 104–131 show a composition bias toward basic and acidic residues; that stretch reads KARDERDSRRGPAGERSYDEAHAEEIAE.

The protein belongs to the bacterial ribosomal protein bS6 family.

Binds together with bS18 to 16S ribosomal RNA. This is Small ribosomal subunit protein bS6 from Shewanella baltica (strain OS223).